The following is a 365-amino-acid chain: Succinyl-diaminopimelate desuccinylase (365 aa).

H65 contributes to the Zn(2+) binding site. The active site involves D67. Residue D96 participates in Zn(2+) binding. E126 serves as the catalytic Proton acceptor. E127, E155, and H340 together coordinate Zn(2+).

It belongs to the peptidase M20A family. DapE subfamily. As to quaternary structure, homodimer. Zn(2+) serves as cofactor. It depends on Co(2+) as a cofactor.

The catalysed reaction is N-succinyl-(2S,6S)-2,6-diaminopimelate + H2O = (2S,6S)-2,6-diaminopimelate + succinate. It participates in amino-acid biosynthesis; L-lysine biosynthesis via DAP pathway; LL-2,6-diaminopimelate from (S)-tetrahydrodipicolinate (succinylase route): step 3/3. Catalyzes the hydrolysis of N-succinyl-L,L-diaminopimelic acid (SDAP), forming succinate and LL-2,6-diaminopimelate (DAP), an intermediate involved in the bacterial biosynthesis of lysine and meso-diaminopimelic acid, an essential component of bacterial cell walls. This Campylobacter jejuni subsp. jejuni serotype O:2 (strain ATCC 700819 / NCTC 11168) protein is Succinyl-diaminopimelate desuccinylase.